Consider the following 282-residue polypeptide: Bis(5'-nucleosyl)-tetraphosphatase, symmetrical (282 aa).

The protein belongs to the Ap4A hydrolase family.

The catalysed reaction is P(1),P(4)-bis(5'-adenosyl) tetraphosphate + H2O = 2 ADP + 2 H(+). In terms of biological role, hydrolyzes diadenosine 5',5'''-P1,P4-tetraphosphate to yield ADP. In Escherichia coli O127:H6 (strain E2348/69 / EPEC), this protein is Bis(5'-nucleosyl)-tetraphosphatase, symmetrical.